The chain runs to 185 residues: Ribosome-recycling factor (185 aa).

The protein belongs to the RRF family.

It localises to the cytoplasm. Responsible for the release of ribosomes from messenger RNA at the termination of protein biosynthesis. May increase the efficiency of translation by recycling ribosomes from one round of translation to another. The chain is Ribosome-recycling factor from Vibrio campbellii (strain ATCC BAA-1116).